The chain runs to 581 residues: Trehalase (581 aa).

This sequence belongs to the glycosyl hydrolase 15 family. In terms of assembly, monomer.

The catalysed reaction is alpha,alpha-trehalose + H2O = alpha-D-glucose + beta-D-glucose. Its pathway is glycan degradation; trehalose degradation; D-glucose from alpha,alpha-trehalose: step 1/1. Inhibited by validamycin A. Its function is as follows. Catalyzes the hydrolysis of alpha,alpha-trehalose into two molecules of D-glucose. In Thermoplasma acidophilum (strain ATCC 25905 / DSM 1728 / JCM 9062 / NBRC 15155 / AMRC-C165), this protein is Trehalase.